Reading from the N-terminus, the 144-residue chain is Large ribosomal subunit protein uL16 (144 aa).

Residues 1–16 are compositionally biased toward basic residues; sequence MLIPKRVKYRKQHRGR. The tract at residues 1–23 is disordered; it reads MLIPKRVKYRKQHRGRPGGGMAK.

This sequence belongs to the universal ribosomal protein uL16 family. Part of the 50S ribosomal subunit.

Functionally, binds 23S rRNA and is also seen to make contacts with the A and possibly P site tRNAs. This Pelotomaculum thermopropionicum (strain DSM 13744 / JCM 10971 / SI) protein is Large ribosomal subunit protein uL16.